Reading from the N-terminus, the 191-residue chain is Protein GrpE (191 aa).

A disordered region spans residues 1–22 (MKDKHNQEHDHLSQEEPESCEK).

This sequence belongs to the GrpE family. In terms of assembly, homodimer.

Its subcellular location is the cytoplasm. Participates actively in the response to hyperosmotic and heat shock by preventing the aggregation of stress-denatured proteins, in association with DnaK and GrpE. It is the nucleotide exchange factor for DnaK and may function as a thermosensor. Unfolded proteins bind initially to DnaJ; upon interaction with the DnaJ-bound protein, DnaK hydrolyzes its bound ATP, resulting in the formation of a stable complex. GrpE releases ADP from DnaK; ATP binding to DnaK triggers the release of the substrate protein, thus completing the reaction cycle. Several rounds of ATP-dependent interactions between DnaJ, DnaK and GrpE are required for fully efficient folding. The protein is Protein GrpE of Helicobacter pylori (strain Shi470).